Consider the following 224-residue polypeptide: Mammalian ependymin-related protein 1 (224 aa).

Residues 1–37 form the signal peptide; that stretch reads MPARAPRRLVQGPRGTWLLGSLWVWVLCGLGMAGSLG. Cystine bridges form between Cys-42-Cys-172, Cys-88-Cys-222, and Cys-113-Cys-210. N-linked (GlcNAc...) asparagine glycosylation is found at Asn-130 and Asn-182.

It belongs to the ependymin family. In terms of assembly, homodimer. Post-translationally, N-glycosylated; the glycan contains mannose-6-phosphate moieties. Detected in brain, small intestine and in soleus, extensor digitorum longus and white gastrocnemius (at protein level). Detected in brain and skeletal muscle, and at lower leavels in heart.

Its subcellular location is the lysosome lumen. The protein localises to the secreted. In terms of biological role, binds anionic lipids and gangliosides at acidic pH. The sequence is that of Mammalian ependymin-related protein 1 (Epdr1) from Mus musculus (Mouse).